A 107-amino-acid polypeptide reads, in one-letter code: U1-lycotoxin-Ls1l (107 aa).

The N-terminal stretch at 1–20 (MMKVLVVVALLVTLISYSSS) is a signal peptide. Positions 21 to 41 (EGIDDLEADELLSLMANEQTR) are excised as a propeptide. 4 cysteine pairs are disulfide-bonded: cysteine 44–cysteine 59, cysteine 51–cysteine 68, cysteine 58–cysteine 86, and cysteine 70–cysteine 84.

The protein belongs to the neurotoxin 19 (CSTX) family. 04 (U1-Lctx) subfamily. Expressed by the venom gland.

It is found in the secreted. The sequence is that of U1-lycotoxin-Ls1l from Lycosa singoriensis (Wolf spider).